A 100-amino-acid polypeptide reads, in one-letter code: Small ribosomal subunit protein uS14c (100 aa).

It belongs to the universal ribosomal protein uS14 family. As to quaternary structure, part of the 30S ribosomal subunit.

The protein localises to the plastid. Its subcellular location is the chloroplast. Binds 16S rRNA, required for the assembly of 30S particles. The sequence is that of Small ribosomal subunit protein uS14c from Barbarea verna (Land cress).